Reading from the N-terminus, the 113-residue chain is uncharacterized protein (113 aa).

It to H.pylori HP0245/JHP0230.

This is an uncharacterized protein from Campylobacter jejuni subsp. jejuni serotype O:2 (strain ATCC 700819 / NCTC 11168).